The primary structure comprises 212 residues: ATP-dependent dethiobiotin synthetase BioD (212 aa).

13 to 18 contacts ATP; it reads GIGKTV. T17 lines the Mg(2+) pocket. K33 is an active-site residue. Substrate is bound at residue S37. E100 contributes to the Mg(2+) binding site. ATP is bound by residues 100 to 103 and 184 to 186; these read EGAG and PLL.

This sequence belongs to the dethiobiotin synthetase family. In terms of assembly, homodimer. Requires Mg(2+) as cofactor.

It is found in the cytoplasm. It carries out the reaction (7R,8S)-7,8-diammoniononanoate + CO2 + ATP = (4R,5S)-dethiobiotin + ADP + phosphate + 3 H(+). Its pathway is cofactor biosynthesis; biotin biosynthesis; biotin from 7,8-diaminononanoate: step 1/2. Functionally, catalyzes a mechanistically unusual reaction, the ATP-dependent insertion of CO2 between the N7 and N8 nitrogen atoms of 7,8-diaminopelargonic acid (DAPA, also called 7,8-diammoniononanoate) to form a ureido ring. This Brucella melitensis biotype 2 (strain ATCC 23457) protein is ATP-dependent dethiobiotin synthetase BioD.